Here is a 408-residue protein sequence, read N- to C-terminus: LL-diaminopimelate aminotransferase (408 aa).

The substrate site is built by tyrosine 15 and glycine 42. Residues tyrosine 72, 108 to 109 (SK), tyrosine 132, asparagine 187, tyrosine 218, and 246 to 248 (SFS) each bind pyridoxal 5'-phosphate. Lysine 109, tyrosine 132, and asparagine 187 together coordinate substrate. Lysine 249 is modified (N6-(pyridoxal phosphate)lysine). 2 residues coordinate pyridoxal 5'-phosphate: arginine 257 and asparagine 292. Substrate is bound by residues asparagine 292 and arginine 388.

Belongs to the class-I pyridoxal-phosphate-dependent aminotransferase family. LL-diaminopimelate aminotransferase subfamily. As to quaternary structure, homodimer. It depends on pyridoxal 5'-phosphate as a cofactor.

It catalyses the reaction (2S,6S)-2,6-diaminopimelate + 2-oxoglutarate = (S)-2,3,4,5-tetrahydrodipicolinate + L-glutamate + H2O + H(+). It participates in amino-acid biosynthesis; L-lysine biosynthesis via DAP pathway; LL-2,6-diaminopimelate from (S)-tetrahydrodipicolinate (aminotransferase route): step 1/1. In terms of biological role, involved in the synthesis of meso-diaminopimelate (m-DAP or DL-DAP), required for both lysine and peptidoglycan biosynthesis. Catalyzes the direct conversion of tetrahydrodipicolinate to LL-diaminopimelate. This is LL-diaminopimelate aminotransferase from Prochlorococcus marinus subsp. pastoris (strain CCMP1986 / NIES-2087 / MED4).